The sequence spans 96 residues: Citrate lyase acyl carrier protein (96 aa).

An O-(phosphoribosyl dephospho-coenzyme A)serine modification is found at Ser14.

It belongs to the CitD family. In terms of assembly, oligomer with a subunit composition of (alpha,beta,gamma)6.

It localises to the cytoplasm. In terms of biological role, covalent carrier of the coenzyme of citrate lyase. The protein is Citrate lyase acyl carrier protein of Lactococcus lactis subsp. lactis (strain IL1403) (Streptococcus lactis).